We begin with the raw amino-acid sequence, 430 residues long: Long-chain specific acyl-CoA dehydrogenase, mitochondrial (430 aa).

The N-terminal 30 residues, 1–30 (MATRLLRGSLRLWGGLCAPRLPTASRCSHS), are a transit peptide targeting the mitochondrion. Lys42 is modified (N6-acetyllysine). A phosphoserine mark is found at Ser54 and Ser55. Residues Lys66 and Lys81 each carry the N6-acetyllysine; alternate modification. N6-succinyllysine; alternate is present on residues Lys66 and Lys81. Residues Lys92 and Lys95 each carry the N6-acetyllysine modification. Residue Lys165 is modified to N6-succinyllysine. FAD is bound by residues 170–179 (IAMTEPGAGS) and 203–205 (FIT). Substrate is bound at residue Ser179. Residue 227-228 (AH) participates in substrate binding. Lys240 carries the N6-succinyllysine modification. Residues Lys254 and Lys279 each carry the N6-acetyllysine; alternate modification. Residues Lys254 and Lys279 each carry the N6-succinyllysine; alternate modification. Residues Tyr282 and 289 to 292 (PQER) each bind substrate. Catalysis depends on Glu291, which acts as the Proton acceptor. Arg317 is an FAD binding site. At Lys318 the chain carries N6-acetyllysine. Lys322 is modified (N6-acetyllysine; alternate). An N6-succinyllysine; alternate modification is found at Lys322. FAD is bound at residue Gln328. Lys358 carries the N6-acetyllysine modification. At Ser362 the chain carries Phosphoserine. 385–389 (QLHGG) is an FAD binding site. 412 to 413 (GG) lines the substrate pocket. 414 to 416 (TNE) is an FAD binding site.

Belongs to the acyl-CoA dehydrogenase family. As to quaternary structure, homotetramer. It depends on FAD as a cofactor. Acetylation at Lys-318 and Lys-322 in proximity of the cofactor-binding sites strongly reduces catalytic activity. These sites are deacetylated by SIRT3.

It is found in the mitochondrion matrix. It catalyses the reaction a long-chain 2,3-saturated fatty acyl-CoA + oxidized [electron-transfer flavoprotein] + H(+) = a long-chain (2E)-enoyl-CoA + reduced [electron-transfer flavoprotein]. The catalysed reaction is hexanoyl-CoA + oxidized [electron-transfer flavoprotein] + H(+) = (2E)-hexenoyl-CoA + reduced [electron-transfer flavoprotein]. The enzyme catalyses octanoyl-CoA + oxidized [electron-transfer flavoprotein] + H(+) = (2E)-octenoyl-CoA + reduced [electron-transfer flavoprotein]. It carries out the reaction decanoyl-CoA + oxidized [electron-transfer flavoprotein] + H(+) = (2E)-decenoyl-CoA + reduced [electron-transfer flavoprotein]. It catalyses the reaction dodecanoyl-CoA + oxidized [electron-transfer flavoprotein] + H(+) = (2E)-dodecenoyl-CoA + reduced [electron-transfer flavoprotein]. The catalysed reaction is tetradecanoyl-CoA + oxidized [electron-transfer flavoprotein] + H(+) = (2E)-tetradecenoyl-CoA + reduced [electron-transfer flavoprotein]. The enzyme catalyses oxidized [electron-transfer flavoprotein] + hexadecanoyl-CoA + H(+) = (2E)-hexadecenoyl-CoA + reduced [electron-transfer flavoprotein]. It carries out the reaction octadecanoyl-CoA + oxidized [electron-transfer flavoprotein] + H(+) = (2E)-octadecenoyl-CoA + reduced [electron-transfer flavoprotein]. It catalyses the reaction eicosanoyl-CoA + oxidized [electron-transfer flavoprotein] + H(+) = (2E)-eicosenoyl-CoA + reduced [electron-transfer flavoprotein]. The catalysed reaction is docosanoyl-CoA + oxidized [electron-transfer flavoprotein] + H(+) = (2E)-docosenoyl-CoA + reduced [electron-transfer flavoprotein]. The enzyme catalyses tetracosanoyl-CoA + oxidized [electron-transfer flavoprotein] + H(+) = (2E)-tetracosenoyl-CoA + reduced [electron-transfer flavoprotein]. It carries out the reaction (5E)-tetradecenoyl-CoA + oxidized [electron-transfer flavoprotein] + H(+) = (2E,5E)-tetradecadienoyl-CoA + reduced [electron-transfer flavoprotein]. It catalyses the reaction (5Z)-tetradecenoyl-CoA + oxidized [electron-transfer flavoprotein] + H(+) = (2E,5Z)-tetradecadienoyl-CoA + reduced [electron-transfer flavoprotein]. The catalysed reaction is oxidized [electron-transfer flavoprotein] + (9Z)-octadecenoyl-CoA + H(+) = (2E,9Z)-octadecadienoyl-CoA + reduced [electron-transfer flavoprotein]. It functions in the pathway lipid metabolism; mitochondrial fatty acid beta-oxidation. Functionally, long-chain specific acyl-CoA dehydrogenase is one of the acyl-CoA dehydrogenases that catalyze the first step of mitochondrial fatty acid beta-oxidation, an aerobic process breaking down fatty acids into acetyl-CoA and allowing the production of energy from fats. The first step of fatty acid beta-oxidation consists in the removal of one hydrogen from C-2 and C-3 of the straight-chain fatty acyl-CoA thioester, resulting in the formation of trans-2-enoyl-CoA. Among the different mitochondrial acyl-CoA dehydrogenases, long-chain specific acyl-CoA dehydrogenase can act on saturated and unsaturated acyl-CoAs with 6 to 24 carbons with a preference for 8 to 18 carbons long primary chains. The protein is Long-chain specific acyl-CoA dehydrogenase, mitochondrial of Sus scrofa (Pig).